Reading from the N-terminus, the 200-residue chain is Large ribosomal subunit protein uL4 (200 aa).

The tract at residues 42–65 is disordered; that stretch reads TRAQKTRSEVSGGGAKPWRQKGTG.

Belongs to the universal ribosomal protein uL4 family. As to quaternary structure, part of the 50S ribosomal subunit.

Its function is as follows. One of the primary rRNA binding proteins, this protein initially binds near the 5'-end of the 23S rRNA. It is important during the early stages of 50S assembly. It makes multiple contacts with different domains of the 23S rRNA in the assembled 50S subunit and ribosome. Forms part of the polypeptide exit tunnel. The chain is Large ribosomal subunit protein uL4 from Vibrio campbellii (strain ATCC BAA-1116).